Reading from the N-terminus, the 175-residue chain is Regenerating islet-derived protein 3-alpha (175 aa).

Positions 1-26 are cleaved as a signal peptide; it reads MLPPMALPSVSWMLLSCLMLLSQVQG. The propeptide occupies 27-37; it reads EEPQRELPSAR. 3 cysteine pairs are disulfide-bonded: Cys-40–Cys-51, Cys-68–Cys-171, and Cys-146–Cys-163. The C-type lectin domain maps to 47-172; the sequence is YGSHCYALFL…CNVRLPYVCK (126 aa). Zn(2+) is bound by residues His-50 and His-107. Positions 103–118 are sufficient to activate EXTL3; that stretch reads WIGLHDPTQGTEPNGE. Positions 114–116 match the EPN motif; it reads EPN. Positions 121 and 145 each coordinate Zn(2+).

Forms a hexameric membrane-permeabilizing oligomeric pore on membrane phospholipids. The hexamer is formed by three dimers related by helical symmetry. Forms filaments, filamentation traps pore complexes and limits damage to host cells. Interacts with EXTL3. In terms of processing, proteolytic processing by trypsin removes an inhibitory N-terminal propeptide and is essential for peptidoglycan binding and antibacterial activity. In terms of tissue distribution, expressed by keratinocytes. Highly expressed in epidermal keratinocytes of psoriasis patients (at protein level). Constitutively expressed in intestine. Low expression is found in healthy pancreas. Overexpressed during the acute phase of pancreatitis and in some patients with chronic pancreatitis.

The protein resides in the secreted. Lipopolysaccharide inhibits pore-forming activity, explaining why is bactericidal for Gram-positive but not Gram-negative bacteria. Functionally, bactericidal C-type lectin which acts exclusively against Gram-positive bacteria and mediates bacterial killing by binding to surface-exposed carbohydrate moieties of peptidoglycan. Binds membrane phospholipids and kills bacteria by forming a hexameric membrane-permeabilizing oligomeric pore. In terms of biological role, acts as a hormone in response to different stimuli like anti-inflammatory signals, such as IL17A, or gut microbiome. Secreted by different cell types to activate its receptor EXTL3 and induce cell specific signaling pathways. Induced by IL17A in keratinocytes, regulates keratinocyte proliferation and differentiation after skin injury via activation of EXTL3-PI3K-AKT signaling pathway. In parallel, inhibits skin inflammation through the inhibition of inflammatory cytokines such as IL6 and TNF. In pancreas, is able to permealize beta-cells membrane and stimulate their proliferation. Has bacteriostatic activity. The polypeptide is Regenerating islet-derived protein 3-alpha (Homo sapiens (Human)).